We begin with the raw amino-acid sequence, 284 residues long: Proline-rich protein 32 (284 aa).

Disordered regions lie at residues 59-80 (RPPF…APRH), 97-119 (EINS…NMSQ), and 143-171 (SGNN…RGPP).

The sequence is that of Proline-rich protein 32 (Prr32) from Mus musculus (Mouse).